A 463-amino-acid polypeptide reads, in one-letter code: Fumarate hydratase class II (463 aa).

Substrate contacts are provided by residues 97–99 (SGT), 128–131 (HPND), 138–140 (SSN), and threonine 186. The active-site Proton donor/acceptor is histidine 187. Residue serine 317 is part of the active site. Substrate contacts are provided by residues serine 318 and 323–325 (KVN).

The protein belongs to the class-II fumarase/aspartase family. Fumarase subfamily. In terms of assembly, homotetramer.

It localises to the cytoplasm. The enzyme catalyses (S)-malate = fumarate + H2O. Its pathway is carbohydrate metabolism; tricarboxylic acid cycle; (S)-malate from fumarate: step 1/1. Functionally, involved in the TCA cycle. Catalyzes the stereospecific interconversion of fumarate to L-malate. The polypeptide is Fumarate hydratase class II (Helicobacter pylori (strain J99 / ATCC 700824) (Campylobacter pylori J99)).